Consider the following 713-residue polypeptide: MIARKRKSNGSETTSGKIPKDDVSSESCLDQPADESVHEVVTFEPSTLPSVHYDPDTTEPISCSLKSLDELLSWKRNEASIFNVSSVPLASRYPPLESCPRRTLVSHDMMGGYLEDRFIQGAEVETPYAFYHWEYIDIFNYFSHQMVTIPPAVWTNAAHRHGVLSIGTFITEWTDGAKTCEAFLADEESYRAAADKLVQISHCNGFDGWLINIENELSETAVNNTGPFLRYLTDQMHERVPGSVVIWYDSVLKDGKLLWQNELNDNNRMFFDACDGFFTNYNWTEQSLEGMKSYAAAQGRFADIYVGVDVFARGKVIGGKYETNKALELIRKYDLSTAIFAPDWVYECHEKADFRQNQDKFWSLLSDFLYIHRPSSNLPFVSSFCQGFGKSLYWRGKVETERSWFNLHAQEIQPLYLSESFGNGGWLRTRGCSEDAWIGGSSLMLEGMIPSGLSDVCARIFSLHVPLAARTFVSFVFKPPVGVKVSLELKTIDGPLCTFDGTEEIASRSVFPEALAESNQLVEQFAQNCGQWASDGWATRCFLLKMIGCSLREVCIRVSRDGGDEDINFNCRIGEIMLLDADNLQAPLQSVEGICVNDVVWQTGVLKGDGHTLKVLLNATLRWQYPTRQVRHFRIHWRHLRGPDPRIPSGPLTLIGRSYSALYRVVELEVPAAPGLIELVVEPVSKEGFSVPEAQWGRQTLSYSQSPSGNPSH.

Residues Met-1–Ser-36 form a disordered region. One can recognise a BRCT domain in the interval Phe-270–Trp-362.

It belongs to the glycosyl hydrolase 85 family.

The protein resides in the cytoplasm. Its subcellular location is the cytosol. It carries out the reaction an N(4)-(oligosaccharide-(1-&gt;3)-[oligosaccharide-(1-&gt;6)]-beta-D-Man-(1-&gt;4)-beta-D-GlcNAc-(1-&gt;4)-alpha-D-GlcNAc)-L-asparaginyl-[protein] + H2O = an oligosaccharide-(1-&gt;3)-[oligosaccharide-(1-&gt;6)]-beta-D-Man-(1-&gt;4)-D-GlcNAc + N(4)-(N-acetyl-beta-D-glucosaminyl)-L-asparaginyl-[protein]. Its function is as follows. Endoglycosidase that releases N-glycans from glycoproteins by cleaving the beta-1,4-glycosidic bond in the N,N'-diacetylchitobiose core. Involved in the processing of free oligosaccharides in the cytosol. The sequence is that of Cytosolic endo-beta-N-acetylglucosaminidase (engase) from Danio rerio (Zebrafish).